Reading from the N-terminus, the 104-residue chain is Large ribosomal subunit protein uL24 (104 aa).

The protein belongs to the universal ribosomal protein uL24 family. As to quaternary structure, part of the 50S ribosomal subunit.

Functionally, one of two assembly initiator proteins, it binds directly to the 5'-end of the 23S rRNA, where it nucleates assembly of the 50S subunit. One of the proteins that surrounds the polypeptide exit tunnel on the outside of the subunit. In Bartonella quintana (strain Toulouse) (Rochalimaea quintana), this protein is Large ribosomal subunit protein uL24.